Consider the following 1241-residue polypeptide: ATP-dependent helicase/nuclease subunit A (1241 aa).

In terms of domain architecture, UvrD-like helicase ATP-binding spans 12–485; the sequence is SQWTDDQWKA…IDLAKNFRSR (474 aa). 33-40 contributes to the ATP binding site; it reads AAAGSGKT. Positions 505-805 constitute a UvrD-like helicase C-terminal domain; sequence GEIDYDADAE…RIMTIHKSKG (301 aa).

Belongs to the helicase family. AddA subfamily. As to quaternary structure, heterodimer of AddA and AddB/RexB. It depends on Mg(2+) as a cofactor.

It catalyses the reaction Couples ATP hydrolysis with the unwinding of duplex DNA by translocating in the 3'-5' direction.. It carries out the reaction ATP + H2O = ADP + phosphate + H(+). Its function is as follows. The heterodimer acts as both an ATP-dependent DNA helicase and an ATP-dependent, dual-direction single-stranded exonuclease. Recognizes the chi site generating a DNA molecule suitable for the initiation of homologous recombination. The AddA nuclease domain is required for chi fragment generation; this subunit has the helicase and 3' -&gt; 5' nuclease activities. This is ATP-dependent helicase/nuclease subunit A from Bacillus cereus (strain ZK / E33L).